Reading from the N-terminus, the 317-residue chain is Protoheme IX farnesyltransferase (317 aa).

Helical transmembrane passes span 25–45 (FFAL…LVGM), 54–74 (PVIA…SGCL), 126–146 (LAAG…SMWL), 154–174 (IVIG…VVTG), 181–201 (LVLF…LALV), 227–244 (IVAY…PVAL), 249–271 (LIYG…QVYH), and 281–301 (AAMG…SALL).

It belongs to the UbiA prenyltransferase family. Protoheme IX farnesyltransferase subfamily.

It localises to the cell inner membrane. It catalyses the reaction heme b + (2E,6E)-farnesyl diphosphate + H2O = Fe(II)-heme o + diphosphate. Its pathway is porphyrin-containing compound metabolism; heme O biosynthesis; heme O from protoheme: step 1/1. Its function is as follows. Converts heme B (protoheme IX) to heme O by substitution of the vinyl group on carbon 2 of heme B porphyrin ring with a hydroxyethyl farnesyl side group. The protein is Protoheme IX farnesyltransferase of Methylobacterium sp. (strain 4-46).